A 584-amino-acid chain; its full sequence is Pectinesterase 3 (584 aa).

Positions 1–50 (MTRIKEFFTKLSESSTNQNISNIPKKKKKLFLALFATLLVVAAVIGIVAG) are cleaved as a signal peptide. Positions 51-266 (VNSRKNSGDN…LSTGDRRLLQ (216 aa)) are excised as a propeptide. N-linked (GlcNAc...) asparagine glycosylation is found at Asn-108, Asn-129, and Asn-226. Substrate contacts are provided by Thr-348 and Gln-378. Asp-401 acts as the Proton donor in catalysis. Cys-415 and Cys-435 form a disulfide bridge. The Nucleophile role is filled by Asp-422. 2 residues coordinate substrate: Arg-490 and Trp-492.

This sequence in the N-terminal section; belongs to the PMEI family. The protein in the C-terminal section; belongs to the pectinesterase family. As to expression, in the peel, expression is localized to the region of the flavedo close to the oil glands, and to the innermost layer of the albedo. In the lamella, expression is localized to the cell layers opposing the fruit tissue, and to the parenchyma surrounding the vascular tissue. In the fruit vesicles, expression is restricted to the peripheral cell layers and stalk cells. High levels of expression are detected in the core matrix.

It is found in the secreted. The protein localises to the cell wall. The catalysed reaction is [(1-&gt;4)-alpha-D-galacturonosyl methyl ester](n) + n H2O = [(1-&gt;4)-alpha-D-galacturonosyl](n) + n methanol + n H(+). Its pathway is glycan metabolism; pectin degradation; 2-dehydro-3-deoxy-D-gluconate from pectin: step 1/5. In terms of biological role, acts in the modification of cell walls via demethylesterification of cell wall pectin. This Citrus sinensis (Sweet orange) protein is Pectinesterase 3.